The following is a 263-amino-acid chain: Hydroxymethylpyrimidine/phosphomethylpyrimidine kinase (263 aa).

Residue Gln44 participates in 4-amino-5-hydroxymethyl-2-methylpyrimidine binding.

It belongs to the ThiD family.

It catalyses the reaction 4-amino-5-hydroxymethyl-2-methylpyrimidine + ATP = 4-amino-2-methyl-5-(phosphooxymethyl)pyrimidine + ADP + H(+). The catalysed reaction is 4-amino-2-methyl-5-(phosphooxymethyl)pyrimidine + ATP = 4-amino-2-methyl-5-(diphosphooxymethyl)pyrimidine + ADP. The protein operates within cofactor biosynthesis; thiamine diphosphate biosynthesis; 4-amino-2-methyl-5-diphosphomethylpyrimidine from 5-amino-1-(5-phospho-D-ribosyl)imidazole: step 2/3. It participates in cofactor biosynthesis; thiamine diphosphate biosynthesis; 4-amino-2-methyl-5-diphosphomethylpyrimidine from 5-amino-1-(5-phospho-D-ribosyl)imidazole: step 3/3. In terms of biological role, catalyzes the phosphorylation of hydroxymethylpyrimidine phosphate (HMP-P) to HMP-PP, and of HMP to HMP-P. The polypeptide is Hydroxymethylpyrimidine/phosphomethylpyrimidine kinase (thiD) (Synechococcus elongatus (strain ATCC 33912 / PCC 7942 / FACHB-805) (Anacystis nidulans R2)).